Reading from the N-terminus, the 342-residue chain is Tetraacyldisaccharide 4'-kinase (342 aa).

Residue 68-75 (TVGGTGKT) participates in ATP binding.

It belongs to the LpxK family.

The catalysed reaction is a lipid A disaccharide + ATP = a lipid IVA + ADP + H(+). It functions in the pathway glycolipid biosynthesis; lipid IV(A) biosynthesis; lipid IV(A) from (3R)-3-hydroxytetradecanoyl-[acyl-carrier-protein] and UDP-N-acetyl-alpha-D-glucosamine: step 6/6. Transfers the gamma-phosphate of ATP to the 4'-position of a tetraacyldisaccharide 1-phosphate intermediate (termed DS-1-P) to form tetraacyldisaccharide 1,4'-bis-phosphate (lipid IVA). The sequence is that of Tetraacyldisaccharide 4'-kinase from Burkholderia cenocepacia (strain HI2424).